Reading from the N-terminus, the 168-residue chain is Ecotin (168 aa).

The signal sequence occupies residues 1–21; it reads MKRLSIAITSLLMAASASTIA. Cysteine 76 and cysteine 113 are oxidised to a cystine.

This sequence belongs to the protease inhibitor I11 (ecotin) family. Homodimer.

It is found in the periplasm. General inhibitor of pancreatic serine proteases: inhibits chymotrypsin, trypsin, elastases, factor X, kallikrein as well as a variety of other proteases. This chain is Ecotin, found in Yersinia enterocolitica serotype O:8 / biotype 1B (strain NCTC 13174 / 8081).